Consider the following 605-residue polypeptide: MKWITPASLILLLHFAASKALHENEFGIASTLDSSQCVTEKNVLSIATITFTQFVPEATEEEVNKMTSDVLAAMKKNSGDGCLESQLSVFLDEICHETELSNKYGLSGCCSQSGVERHQCLLARKKTAPASVPPFQFPEPAESCKAHEENRAVFMNRFIYEVSRRNPFMYAPAILSLAAQYDKVVLACCKADNKEECFQTKRASIAKELREGSMLNEHVCSVIRKFGSRNLQATTIIKLSQKLTEANFTEIQKLALDVAHIHEECCQGNSLECLQDGEKVMTYICSQQNILSSKIAECCKLPMIQLGFCIIHAENGVKPEGLSLNPSQFLGDRNFAQFSSEEKIMFMASFLHEYSRTHPNLPVSVILRIAKTYQEILEKCSQSGNLPGCQDNLEEELQKHIEESQALSKQSCALYQTLGDYKLQNLFLIGYTRKAPQLTSAELIDLTGKMVSIASTCCQLSEEKWSGCGEGMADIFIGHLCIRNEASPVNSGISHCCNSSYSNRRLCITSFLRDETYAPPPFSEDKFIFHKDLCQAQGKALQTMKQELLINLVKQKPELTEEQLAAVTADFSGLLEKCCKAQDQEVCFTEEGPKLISKTRDALGV.

The N-terminal stretch at 1-18 is a signal peptide; it reads MKWITPASLILLLHFAAS. 3 consecutive Albumin domains span residues 19 to 207, 208 to 398, and 399 to 597; these read KALH…SIAK, ELRE…EELQ, and KHIE…KLIS. 8 disulfide bridges follow: cysteine 95-cysteine 110, cysteine 109-cysteine 120, cysteine 144-cysteine 189, cysteine 188-cysteine 197, cysteine 220-cysteine 266, cysteine 265-cysteine 273, cysteine 285-cysteine 299, and cysteine 298-cysteine 309. Residues serine 107, serine 111, and serine 113 each carry the phosphoserine modification. Residue asparagine 247 is glycosylated (N-linked (GlcNAc...) asparagine). At serine 340 the chain carries Phosphoserine. Cystine bridges form between cysteine 380–cysteine 389, cysteine 412–cysteine 458, cysteine 457–cysteine 468, cysteine 481–cysteine 497, cysteine 496–cysteine 507, cysteine 534–cysteine 579, and cysteine 578–cysteine 587. Serine 440 bears the Phosphoserine mark. Asparagine 498 carries N-linked (GlcNAc...) asparagine glycosylation.

The protein belongs to the ALB/AFP/VDB family. In terms of processing, glycosylated; contains two glycans. Post-translationally, sulfated. As to expression, plasma.

It localises to the secreted. Functionally, binds estrogens, fatty acids and metals. This Mus musculus (Mouse) protein is Alpha-fetoprotein (Afp).